The following is a 336-amino-acid chain: tRNA N6-adenosine threonylcarbamoyltransferase (336 aa).

Residues His115 and His119 each contribute to the Fe cation site. Residues Leu137 to Gly141, Asp170, Gly183, Asp187, and Asn276 each bind substrate. Asp302 contacts Fe cation.

Belongs to the KAE1 / TsaD family. Fe(2+) serves as cofactor.

It localises to the cytoplasm. It carries out the reaction L-threonylcarbamoyladenylate + adenosine(37) in tRNA = N(6)-L-threonylcarbamoyladenosine(37) in tRNA + AMP + H(+). Functionally, required for the formation of a threonylcarbamoyl group on adenosine at position 37 (t(6)A37) in tRNAs that read codons beginning with adenine. Is involved in the transfer of the threonylcarbamoyl moiety of threonylcarbamoyl-AMP (TC-AMP) to the N6 group of A37, together with TsaE and TsaB. TsaD likely plays a direct catalytic role in this reaction. This chain is tRNA N6-adenosine threonylcarbamoyltransferase, found in Streptococcus suis (strain 98HAH33).